A 55-amino-acid chain; its full sequence is MYNAPPPQDMSYYDHCQRRHEEKGCLYACIFTALCCFCCYETCECCLDCLCCCCN.

The chain crosses the membrane as a helical span at residues 24–40; sequence GCLYACIFTALCCFCCY.

This sequence belongs to the CYSTM1 family.

Its subcellular location is the cell membrane. It localises to the secreted. It is found in the cell wall. Confers resistance to heavy metal ions (e.g. cadmium (CdCl(2)) and copper (CuCl(2))) by chelating them at the plasma membrane of root cells, thus stopping their entry and reducing their accumulation. The protein is Protein CADMIUM TOLERANCE 1 of Echinochloa crus-galli subsp. caudata (Cockspur).